Here is a 131-residue protein sequence, read N- to C-terminus: Glycine cleavage system H protein (131 aa).

The 83-residue stretch at 24 to 106 (TVRVGITDYA…YGEGWLVDLR (83 aa)) folds into the Lipoyl-binding domain. N6-lipoyllysine is present on lysine 65.

It belongs to the GcvH family. In terms of assembly, the glycine cleavage system is composed of four proteins: P, T, L and H. (R)-lipoate serves as cofactor.

Functionally, the glycine cleavage system catalyzes the degradation of glycine. The H protein shuttles the methylamine group of glycine from the P protein to the T protein. The protein is Glycine cleavage system H protein of Mycolicibacterium smegmatis (strain ATCC 700084 / mc(2)155) (Mycobacterium smegmatis).